The sequence spans 179 residues: Interleukin-10 (179 aa).

The first 19 residues, 1–19 (MPSPALLCCCLVLLAGVGA), serve as a signal peptide directing secretion. 2 cysteine pairs are disulfide-bonded: C31-C127 and C81-C133. N135 is a glycosylation site (N-linked (GlcNAc...) asparagine).

Belongs to the IL-10 family. Homodimer. Interacts with IL10RA and IL10RB.

Its subcellular location is the secreted. Its function is as follows. Major immune regulatory cytokine that acts on many cells of the immune system where it has profound anti-inflammatory functions, limiting excessive tissue disruption caused by inflammation. Mechanistically, IL10 binds to its heterotetrameric receptor comprising IL10RA and IL10RB leading to JAK1 and STAT2-mediated phosphorylation of STAT3. In turn, STAT3 translocates to the nucleus where it drives expression of anti-inflammatory mediators. Targets antigen-presenting cells (APCs) such as macrophages and monocytes and inhibits their release of pro-inflammatory cytokines including granulocyte-macrophage colony-stimulating factor /GM-CSF, granulocyte colony-stimulating factor/G-CSF, IL-1 alpha, IL-1 beta, IL-6, IL-8 and TNF-alpha. Also interferes with antigen presentation by reducing the expression of MHC-class II and co-stimulatory molecules, thereby inhibiting their ability to induce T cell activation. In addition, controls the inflammatory response of macrophages by reprogramming essential metabolic pathways including mTOR signaling. In Vulpes vulpes (Red fox), this protein is Interleukin-10 (IL10).